A 126-amino-acid chain; its full sequence is MDNLIIAGILLLIKAMIFCIVNILEVLLEDIGILKSLFLHNAITIISSSVLYFLLSYYIINPRISASIIFDDCFSIFMLSSYTVCDDILITRILNKQMMLQFHPIRTIIKLLQHFPVKSSPNAHTA.

3 helical membrane-spanning segments follow: residues 4–24 (LIIAGILLLIKAMIFCIVNIL), 42–62 (AITIISSSVLYFLLSYYIINP), and 64–84 (ISASIIFDDCFSIFMLSSYTV).

Its subcellular location is the membrane. This is an uncharacterized protein from Saccharomyces cerevisiae (strain ATCC 204508 / S288c) (Baker's yeast).